Consider the following 270-residue polypeptide: Hairy and enhancer of split-related protein helt (270 aa).

The interval 1–24 (MNARALYKRPPPVSSSQSEASGKR) is disordered. The region spanning 59 to 114 (KTPVSHKVIEKRRRDRINRCLNELGKTVPMALAKQNSGKLEKAEILEMTVQYLRAL) is the bHLH domain. One can recognise an Orange domain in the interval 136–171 (FHYGYHECMKNLVHYLTTVERMETKDTKYARILAFL).

Belongs to the HEY family.

It is found in the nucleus. Its function is as follows. Transcriptional repressor which binds preferentially to the canonical E box sequence 5'-CACGCG-3'. The protein is Hairy and enhancer of split-related protein helt (helt) of Danio rerio (Zebrafish).